Consider the following 242-residue polypeptide: Glutamate transport ATP-binding protein GluA (242 aa).

Residues 2–236 (IKMTGVQKFF…PQTDRAKDFL (235 aa)) enclose the ABC transporter domain. 34-41 (GPSGSGKS) contributes to the ATP binding site.

This sequence belongs to the ABC transporter superfamily. In terms of assembly, the complex is composed of two ATP-binding proteins (GluA), two transmembrane proteins (GluC and GluD) and a solute-binding protein (GluB).

Its subcellular location is the cell membrane. It carries out the reaction a polar amino acid(out) + ATP + H2O = a polar amino acid(in) + ADP + phosphate + H(+). The enzyme catalyses L-glutamate(out) + ATP + H2O = L-glutamate(in) + ADP + phosphate + H(+). In terms of biological role, part of the ABC transporter complex GluABCD involved in glutamate uptake. Probably responsible for energy coupling to the transport system. The protein is Glutamate transport ATP-binding protein GluA of Corynebacterium efficiens (strain DSM 44549 / YS-314 / AJ 12310 / JCM 11189 / NBRC 100395).